A 303-amino-acid polypeptide reads, in one-letter code: Flavin-dependent thymidylate synthase (303 aa).

Residues 1 to 21 (MALTSEQRAEIEAQRSEPQLT) are disordered. One can recognise a ThyX domain in the interval 43–256 (GFLRVVDYMG…PATAAAFEEY (214 aa)). Residues Thr-89, 112-114 (RHR), and Glu-120 contribute to the FAD site. Residues 109–112 (QWIR), 120–124 (EYSAR), and Arg-195 contribute to the dUMP site. The short motif at 112-122 (RHRMASVNEYS) is the ThyX motif element. FAD-binding positions include 211–213 (DLH) and His-217. Residue Arg-222 coordinates dUMP. Arg-222 serves as the catalytic Involved in ionization of N3 of dUMP, leading to its activation.

This sequence belongs to the thymidylate synthase ThyX family. Homotetramer. It depends on FAD as a cofactor.

The enzyme catalyses dUMP + (6R)-5,10-methylene-5,6,7,8-tetrahydrofolate + NADPH + H(+) = dTMP + (6S)-5,6,7,8-tetrahydrofolate + NADP(+). The protein operates within pyrimidine metabolism; dTTP biosynthesis. In terms of biological role, catalyzes the reductive methylation of 2'-deoxyuridine-5'-monophosphate (dUMP) to 2'-deoxythymidine-5'-monophosphate (dTMP) while utilizing 5,10-methylenetetrahydrofolate (mTHF) as the methyl donor, and NADPH and FADH(2) as the reductant. In Gluconobacter oxydans (strain 621H) (Gluconobacter suboxydans), this protein is Flavin-dependent thymidylate synthase.